Here is a 146-residue protein sequence, read N- to C-terminus: Heat-stable 19 kDa antigen (146 aa).

The signal sequence occupies residues 1–20 (MKFSLLSAIAAAVFVPFTSA).

The protein belongs to the cerato-platanin family. Glycosylated.

It localises to the secreted. In Coccidioides posadasii (strain C735) (Valley fever fungus), this protein is Heat-stable 19 kDa antigen (CSA).